A 1000-amino-acid polypeptide reads, in one-letter code: Sop-2-related protein 1 (1000 aa).

3 disordered regions span residues 355 to 374 (KIMK…QYQQ), 379 to 422 (HQQH…GPSE), and 466 to 509 (APSE…VARG). The span at 390 to 404 (SSSSVPSTSSPSCSS) shows a compositional bias: low complexity. Positions 406–415 (ANRKEMETVR) are enriched in basic and acidic residues. Low complexity predominate over residues 489 to 502 (GPSQQQQIPGTSQQ). The segment at 633–720 (REQILPQQYM…LNTSSVQPSE (88 aa)) is RNA-binding. The disordered stretch occupies residues 948–1000 (HRMHSQRPPSMGNSSTSSEASSTSPTNAATATSSPASNRPTTSTAQPPTLNPT). Low complexity predominate over residues 960–992 (NSSTSSEASSTSPTNAATATSSPASNRPTTSTA).

As to quaternary structure, binds through its N-terminal region to the N-terminal region of sop-2.

It localises to the nucleus. Acts synergistically with sop-2 to maintain the transcriptionally repressive state of homeotic genes throughout development. Not required to initiate repression, but to maintain it during later stages of development. Also required to repress expression of other genes. Binds RNA in a sequence-independent manner. The chain is Sop-2-related protein 1 (sor-1) from Caenorhabditis elegans.